The chain runs to 153 residues: uncharacterized protein (153 aa).

Positions 19-46 (EKSTRLEEDAMESEPLAGTKTRGRGRRR) are disordered.

This is an uncharacterized protein from Homo sapiens (Human).